The primary structure comprises 412 residues: uncharacterized protein (412 aa).

The TRAM domain maps to 6 to 64 (ELAKGDIISVEVLRPAHGGEGIGHHDGRVIFVKGGIPGDVVDVEIAQLKKKWARGEVVK). Q242, Y278, E300, and D341 together coordinate S-adenosyl-L-methionine. C368 (nucleophile) is an active-site residue.

The protein belongs to the class I-like SAM-binding methyltransferase superfamily. RNA M5U methyltransferase family.

This is an uncharacterized protein from Corynebacterium glutamicum (strain ATCC 13032 / DSM 20300 / JCM 1318 / BCRC 11384 / CCUG 27702 / LMG 3730 / NBRC 12168 / NCIMB 10025 / NRRL B-2784 / 534).